Consider the following 308-residue polypeptide: Cytochrome b (308 aa).

The next 4 membrane-spanning stretches (helical) occupy residues 1–21 (FGSLLGICLLTQIITGLLLAM), 45–66 (WLIRNLHANGASFFFICIYFHI), 81–101 (WNIGVILLLTLMATAFVGYVL), and 146–166 (FFALHFLLPFVIAGLTLVHLT). H51 and H65 together coordinate heme b. Positions 150 and 164 each coordinate heme b. H169 provides a ligand contact to a ubiquinone. Helical transmembrane passes span 194–214 (TKDILGFALMFILLVSLALFS), 256–276 (LGGVLALAASVLVLFLLPLLH), and 288–308 (LSQILFWALVANLLILTWVGS).

The protein belongs to the cytochrome b family. As to quaternary structure, the cytochrome bc1 complex contains 11 subunits: 3 respiratory subunits (MT-CYB, CYC1 and UQCRFS1), 2 core proteins (UQCRC1 and UQCRC2) and 6 low-molecular weight proteins (UQCRH/QCR6, UQCRB/QCR7, UQCRQ/QCR8, UQCR10/QCR9, UQCR11/QCR10 and a cleavage product of UQCRFS1). This cytochrome bc1 complex then forms a dimer. The cofactor is heme b.

The protein localises to the mitochondrion inner membrane. In terms of biological role, component of the ubiquinol-cytochrome c reductase complex (complex III or cytochrome b-c1 complex) that is part of the mitochondrial respiratory chain. The b-c1 complex mediates electron transfer from ubiquinol to cytochrome c. Contributes to the generation of a proton gradient across the mitochondrial membrane that is then used for ATP synthesis. This is Cytochrome b (MT-CYB) from Baeolophus inornatus (Oak titmouse).